The following is a 396-amino-acid chain: Probable sugar efflux transporter (396 aa).

The next 12 helical transmembrane spans lie at V15–L35, V50–L70, L81–F101, V103–A123, A136–L156, F170–L190, P209–Y229, F246–G266, A275–A295, I299–M319, V333–G353, and M364–F384.

The protein belongs to the major facilitator superfamily. SotB (TC 2.A.1.2) family.

The protein localises to the cell inner membrane. Functionally, involved in the efflux of sugars. The physiological role may be the reduction of the intracellular concentration of toxic sugars or sugar metabolites. This Shigella flexneri serotype 5b (strain 8401) protein is Probable sugar efflux transporter.